The sequence spans 593 residues: NADH-quinone oxidoreductase subunit C/D (593 aa).

An NADH dehydrogenase I subunit C region spans residues 1 to 184 (MTADSALYIP…DPYSLSAAKQ (184 aa)). The segment at 208–593 (DYMFLNLGPN…IDFVMADVDR (386 aa)) is NADH dehydrogenase I subunit D.

The protein in the N-terminal section; belongs to the complex I 30 kDa subunit family. It in the C-terminal section; belongs to the complex I 49 kDa subunit family. NDH-1 is composed of 13 different subunits. Subunits NuoB, CD, E, F, and G constitute the peripheral sector of the complex.

It is found in the cell inner membrane. The enzyme catalyses a quinone + NADH + 5 H(+)(in) = a quinol + NAD(+) + 4 H(+)(out). Its function is as follows. NDH-1 shuttles electrons from NADH, via FMN and iron-sulfur (Fe-S) centers, to quinones in the respiratory chain. The immediate electron acceptor for the enzyme in this species is believed to be ubiquinone. Couples the redox reaction to proton translocation (for every two electrons transferred, four hydrogen ions are translocated across the cytoplasmic membrane), and thus conserves the redox energy in a proton gradient. The sequence is that of NADH-quinone oxidoreductase subunit C/D from Pseudomonas aeruginosa (strain UCBPP-PA14).